The primary structure comprises 329 residues: tRNA N6-adenosine threonylcarbamoyltransferase (329 aa).

Residues His107 and His111 each contribute to the Fe cation site. Substrate is bound by residues 129–133 (LVSGG), Asp162, Gly175, and Asn268. Position 296 (Asp296) interacts with Fe cation.

It belongs to the KAE1 / TsaD family. Fe(2+) serves as cofactor.

Its subcellular location is the cytoplasm. It catalyses the reaction L-threonylcarbamoyladenylate + adenosine(37) in tRNA = N(6)-L-threonylcarbamoyladenosine(37) in tRNA + AMP + H(+). In terms of biological role, required for the formation of a threonylcarbamoyl group on adenosine at position 37 (t(6)A37) in tRNAs that read codons beginning with adenine. Is involved in the transfer of the threonylcarbamoyl moiety of threonylcarbamoyl-AMP (TC-AMP) to the N6 group of A37, together with TsaE and TsaB. TsaD likely plays a direct catalytic role in this reaction. The polypeptide is tRNA N6-adenosine threonylcarbamoyltransferase (Nitratiruptor sp. (strain SB155-2)).